Consider the following 210-residue polypeptide: MGQKTNPTGFRLAVRRNWQSRWYATKKDFPKLLEEDQIIREKLMEKLKQASVPRIFIERASNRVRVKIYTARPGIVIGRKGQEIEKIKEELAKLTGKEILLDIQEVKKPEIEAQLVAENVALQLERRIAFRRAMKKAVEMAMTLGAEGIRIQCSGRLGGADIARREWQRKGRVPLHTLRENIDYGFSEAHTVYGKIGVKCWICKKESDNN.

In terms of domain architecture, KH type-2 spans 39 to 107; that stretch reads IREKLMEKLK…EILLDIQEVK (69 aa).

Belongs to the universal ribosomal protein uS3 family. As to quaternary structure, part of the 30S ribosomal subunit. Forms a tight complex with proteins S10 and S14.

Binds the lower part of the 30S subunit head. Binds mRNA in the 70S ribosome, positioning it for translation. The chain is Small ribosomal subunit protein uS3 from Opitutus terrae (strain DSM 11246 / JCM 15787 / PB90-1).